Here is an 806-residue protein sequence, read N- to C-terminus: Phenylalanine--tRNA ligase beta subunit (806 aa).

The region spanning 40-155 (NKGVKGVVVG…SDAEVGADAL (116 aa)) is the tRNA-binding domain. Residues 409–484 (VQERTVSVTA…RLYGYDHIPV (76 aa)) form the B5 domain. Mg(2+) contacts are provided by Asp-462, Asp-468, Glu-471, and Glu-472. In terms of domain architecture, FDX-ACB spans 712–805 (PRFPSMTRDM…VEEKFGAELR (94 aa)).

The protein belongs to the phenylalanyl-tRNA synthetase beta subunit family. Type 1 subfamily. As to quaternary structure, tetramer of two alpha and two beta subunits. Requires Mg(2+) as cofactor.

Its subcellular location is the cytoplasm. The catalysed reaction is tRNA(Phe) + L-phenylalanine + ATP = L-phenylalanyl-tRNA(Phe) + AMP + diphosphate + H(+). This Bacillus cereus (strain ATCC 14579 / DSM 31 / CCUG 7414 / JCM 2152 / NBRC 15305 / NCIMB 9373 / NCTC 2599 / NRRL B-3711) protein is Phenylalanine--tRNA ligase beta subunit.